The primary structure comprises 261 residues: N-acetyltransferase ECO1 (261 aa).

The segment at 29–53 adopts a CCHH-type zinc-finger fold; the sequence is LKCPKCEMKYSPNSIDDVATHKKYH. Positions 102–261 constitute an N-acetyltransferase domain; sequence VMIQENKPAE…SGHILIPCYL (160 aa).

The protein belongs to the acetyltransferase family. ECO subfamily.

The protein resides in the nucleus. Functionally, probable acetyltransferase required for the establishment of sister chromatid cohesion and couple the processes of cohesion and DNA replication to ensure that only sister chromatids become paired together. In contrast to the structural cohesins, the deposition and establishment factors are required only during S phase. Acts by acetylating the cohesin complex component SMC3. This is N-acetyltransferase ECO1 (ECO1) from Candida glabrata (strain ATCC 2001 / BCRC 20586 / JCM 3761 / NBRC 0622 / NRRL Y-65 / CBS 138) (Yeast).